The sequence spans 713 residues: Nucleoporin NUP82 (713 aa).

Residues 1–409 (MSQSSRLSAL…SDLNPLAGLK (409 aa)) form an interaction with NUP116 region. Positions 463 to 713 (TSISTEKSDT…VSQEFTTKTQ (251 aa)) are interaction with NSP1 and NUP159. Residues 582-713 (EAQNKKWDAQ…VSQEFTTKTQ (132 aa)) are a coiled coil. The Bipartite nuclear localization signal motif lies at 607–623 (KKLSQIAESNKFKEKKI).

As to quaternary structure, component of the nuclear pore complex (NPC). NPC constitutes the exclusive means of nucleocytoplasmic transport. NPCs allow the passive diffusion of ions and small molecules and the active, nuclear transport receptor-mediated bidirectional transport of macromolecules such as proteins, RNAs, ribonucleoparticles (RNPs), and ribosomal subunits across the nuclear envelope. Due to its 8-fold rotational symmetry, all subunits are present with 8 copies or multiples thereof. NUP82 is part of the NUP82 subcomplex. This subcomplex is the base for interactions with NUP116 and GLE2, with NUP42 and GLE1 and with DYN2.

It localises to the nucleus. The protein localises to the nuclear pore complex. Its subcellular location is the nucleus membrane. Functionally, functions as a component of the nuclear pore complex (NPC). NPC components, collectively referred to as nucleoporins (NUPs), can play the role of both NPC structural components and of docking or interaction partners for transiently associated nuclear transport factors. It is specifically involved as part of the NUP82-NUP159-NSP1 subcomplex in nuclear mRNA and pre-ribosome export by acting as a linker tethering nucleoporins that are directly involved in nuclear transport to the NPC via its coiled-coil domain. This Saccharomyces cerevisiae (strain ATCC 204508 / S288c) (Baker's yeast) protein is Nucleoporin NUP82 (NUP82).